Consider the following 218-residue polypeptide: rRNA methyltransferase 2, mitochondrial (218 aa).

S-adenosyl-L-methionine-binding positions include 59–62 (PGSW), Asp-80, 96–97 (DI), and Asp-133. The active-site Proton acceptor is Lys-173.

Belongs to the class I-like SAM-binding methyltransferase superfamily. RNA methyltransferase RlmE family.

The protein localises to the mitochondrion. It catalyses the reaction a uridine in 21S rRNA + S-adenosyl-L-methionine = a 2'-O-methyluridine in 21S rRNA + S-adenosyl-L-homocysteine + H(+). Functionally, S-adenosyl-L-methionine-dependent 2'-O-ribose methyltransferase that catalyzes the formation of the 2'-O-methyluridine corresponding to position 2791 in S.cerevisiae 21S mitochondrial large subunit ribosomal RNA (mtLSU rRNA), a universally conserved modification in the peptidyl transferase domain of the mtLSU rRNA. This Schizosaccharomyces pombe (strain 972 / ATCC 24843) (Fission yeast) protein is rRNA methyltransferase 2, mitochondrial.